The chain runs to 487 residues: Cysteine--tRNA ligase (487 aa).

Zn(2+) is bound at residue cysteine 30. Positions 32 to 42 (PTVYGHAHLGH) match the 'HIGH' region motif. Cysteine 226, histidine 251, and glutamate 255 together coordinate Zn(2+). The 'KMSKS' region signature appears at 283-287 (KMGKS). Lysine 286 provides a ligand contact to ATP.

This sequence belongs to the class-I aminoacyl-tRNA synthetase family. Monomer. Zn(2+) is required as a cofactor.

It localises to the cytoplasm. It carries out the reaction tRNA(Cys) + L-cysteine + ATP = L-cysteinyl-tRNA(Cys) + AMP + diphosphate. The sequence is that of Cysteine--tRNA ligase (cysS) from Chlorobaculum tepidum (strain ATCC 49652 / DSM 12025 / NBRC 103806 / TLS) (Chlorobium tepidum).